We begin with the raw amino-acid sequence, 276 residues long: Large ribosomal subunit protein uL2 (276 aa).

The interval 224 to 276 (VMNPVDHPHGGGEGKAPIGRKSPMTPWGKPTLGYKTRKKKNKSDKFIIRRRKK) is disordered. Over residues 258–276 (KTRKKKNKSDKFIIRRRKK) the composition is skewed to basic residues.

Belongs to the universal ribosomal protein uL2 family. As to quaternary structure, part of the 50S ribosomal subunit. Forms a bridge to the 30S subunit in the 70S ribosome.

Functionally, one of the primary rRNA binding proteins. Required for association of the 30S and 50S subunits to form the 70S ribosome, for tRNA binding and peptide bond formation. It has been suggested to have peptidyltransferase activity; this is somewhat controversial. Makes several contacts with the 16S rRNA in the 70S ribosome. The protein is Large ribosomal subunit protein uL2 of Geobacillus stearothermophilus (Bacillus stearothermophilus).